The following is a 394-amino-acid chain: Elongation factor Tu 2 (394 aa).

In terms of domain architecture, tr-type G spans 10-204 (KPHVNVGTIG…FLDSYIPEPE (195 aa)). Residues 19 to 26 (GHVDHGKT) are G1. 19 to 26 (GHVDHGKT) serves as a coordination point for GTP. Position 26 (Thr26) interacts with Mg(2+). The tract at residues 60–64 (GITIN) is G2. The interval 81 to 84 (DCPG) is G3. Residues 81-85 (DCPGH) and 136-139 (NKCD) contribute to the GTP site. Residues 136-139 (NKCD) form a G4 region. The G5 stretch occupies residues 174 to 176 (SAL).

This sequence belongs to the TRAFAC class translation factor GTPase superfamily. Classic translation factor GTPase family. EF-Tu/EF-1A subfamily. Monomer.

Its subcellular location is the cytoplasm. It catalyses the reaction GTP + H2O = GDP + phosphate + H(+). GTP hydrolase that promotes the GTP-dependent binding of aminoacyl-tRNA to the A-site of ribosomes during protein biosynthesis. The sequence is that of Elongation factor Tu 2 from Escherichia coli O139:H28 (strain E24377A / ETEC).